We begin with the raw amino-acid sequence, 575 residues long: Muellerian-inhibiting factor (575 aa).

A signal peptide spans 1–24 (MPGPSLSLALVLSAMGALLRPGTP). Residues 25-466 (REEVFSTSAL…ERSGSARAQR (442 aa)) constitute a propeptide that is removed on maturation. N-linked (GlcNAc...) asparagine glycosylation is found at Asn78 and Asn344. Intrachain disulfides connect Cys477/Cys541, Cys503/Cys572, and Cys507/Cys574.

Belongs to the TGF-beta family. Homodimer; disulfide-linked. Post-translationally, preproprotein is proteolytically processed to generate N- and C-terminal cleavage products that homodimerize and associate to form a biologically active non-covalent complex. Binding of the non-covalent complex to AMHR2 induces dissociation of the pro-region from the mature C-terminal dimer. The N-terminal portion of the protein, despite having no intrinsic activity, has the role of amplifying the activity of the C-terminus. As to expression, expressed in fetal testis and adult ovaries.

The protein localises to the secreted. Its function is as follows. Plays an important role in several reproductive functions. Induces Muellerian duct regression during male fetal sexual differentiation and plays a role in Leydig cell differentiation and function. In female acts as a negative regulator of the primordial to primary follicle transition and decreases FSH sensitivity of growing follicles. AMH signals by binding to a specific type-II receptor, AMHR2, that heterodimerizes with type-I receptors (ACVR1 and BMPR1A), and recruiting SMAD proteins that are translocated to the nucleus to regulate target gene expression. This chain is Muellerian-inhibiting factor (AMH), found in Bos taurus (Bovine).